The sequence spans 142 residues: Lysosomal enzyme trafficking factor (142 aa).

The next 2 membrane-spanning stretches (helical) occupy residues 8–28 (MGWI…YYIF) and 76–96 (LLPF…VFLF).

Belongs to the LYSET family.

The protein resides in the golgi apparatus membrane. Required for mannose-6-phosphate-dependent trafficking of lysosomal enzymes. LYSET bridges GlcNAc-1-phosphate transferase (GNPTAB), to the membrane-bound transcription factor site-1 protease (MBTPS1), thus allowing proteolytic activation of the GNPTAB. GNPTAB is involved in the regulation of M6P-dependent Golgi-to-lysosome trafficking of lysosomal enzymes. LYSET is thus an essential factor for maturation and delivery of lysosomal hydrolases. In Danio rerio (Zebrafish), this protein is Lysosomal enzyme trafficking factor (tmem251).